A 109-amino-acid polypeptide reads, in one-letter code: Large ribosomal subunit protein uL22 (109 aa).

It belongs to the universal ribosomal protein uL22 family. Part of the 50S ribosomal subunit.

In terms of biological role, this protein binds specifically to 23S rRNA; its binding is stimulated by other ribosomal proteins, e.g. L4, L17, and L20. It is important during the early stages of 50S assembly. It makes multiple contacts with different domains of the 23S rRNA in the assembled 50S subunit and ribosome. Its function is as follows. The globular domain of the protein is located near the polypeptide exit tunnel on the outside of the subunit, while an extended beta-hairpin is found that lines the wall of the exit tunnel in the center of the 70S ribosome. This Bordetella petrii (strain ATCC BAA-461 / DSM 12804 / CCUG 43448) protein is Large ribosomal subunit protein uL22.